The primary structure comprises 843 residues: Translation initiation factor IF-2 (843 aa).

Disordered stretches follow at residues 50-72 (LKSS…KTTS) and 94-260 (QRSP…TGPV). The segment covering 96–135 (SPEEIQAEQKREQDERRAAENAARDKVDADVRQRNEEQAR) has biased composition (basic and acidic residues). The segment covering 139–173 (TATAAAAPAAKAEPAPAAAAPAPAPVVADAPASED) has biased composition (low complexity). 2 stretches are compositionally biased toward basic and acidic residues: residues 174 to 203 (AAAR…RGEA) and 227 to 236 (TTDEESDGAR). Basic residues predominate over residues 237 to 250 (RGRGGKGKLKKRNQ). The 174-residue stretch at 343 to 516 (SRAPVVTVMG…EVLELTATPT (174 aa)) folds into the tr-type G domain. Residues 352-359 (GHVDHGKT) are G1. 352 to 359 (GHVDHGKT) serves as a coordination point for GTP. The segment at 377–381 (GITQH) is G2. The G3 stretch occupies residues 398–401 (DTPG). Residues 398-402 (DTPGH) and 452-455 (NKID) contribute to the GTP site. The tract at residues 452-455 (NKID) is G4. The tract at residues 488–490 (SAK) is G5.

The protein belongs to the TRAFAC class translation factor GTPase superfamily. Classic translation factor GTPase family. IF-2 subfamily.

It is found in the cytoplasm. One of the essential components for the initiation of protein synthesis. Protects formylmethionyl-tRNA from spontaneous hydrolysis and promotes its binding to the 30S ribosomal subunits. Also involved in the hydrolysis of GTP during the formation of the 70S ribosomal complex. The sequence is that of Translation initiation factor IF-2 from Pseudomonas putida (strain W619).